The following is a 239-amino-acid chain: L-cystine transport system permease protein TcyL (239 aa).

The region spanning 21-216 is the ABC transmembrane type-1 domain; that stretch reads LPVTLYILTL…AVAVLFEWFF (196 aa). The next 4 helical transmembrane spans lie at 25-45, 69-89, 96-116, and 196-216; these read LYILTLSLLFGFVLGLFLALP, IMVQLFIVFYGIPALTGLIGI, PFYAAVATYALSNAAAAAEII, and EVYIALSIVYYAVAVLFEWFF.

This sequence belongs to the binding-protein-dependent transport system permease family. The complex is composed of two ATP-binding proteins (TcyN), two transmembrane proteins (TcyL and TcyM) and two solute-binding proteins (TcyJ and TcyK).

It localises to the cell membrane. Its function is as follows. Part of the ABC transporter complex TcyJKLMN involved in L-cystine import. Probably responsible for the translocation of the substrate across the membrane. Is also involved in cystathionine, djenkolate, and S-methylcysteine transport. This Bacillus subtilis (strain 168) protein is L-cystine transport system permease protein TcyL (tcyL).